The chain runs to 545 residues: Membrane protein insertase YidC (545 aa).

Helical transmembrane passes span 350-370 (IIGN…AVLY), 424-444 (LPML…FASV), 461-481 (ADPY…QTYL), and 498-518 (PLVF…YWVV).

Belongs to the OXA1/ALB3/YidC family. Type 1 subfamily. As to quaternary structure, interacts with the Sec translocase complex via SecD. Specifically interacts with transmembrane segments of nascent integral membrane proteins during membrane integration.

The protein resides in the cell inner membrane. Its function is as follows. Required for the insertion and/or proper folding and/or complex formation of integral membrane proteins into the membrane. Involved in integration of membrane proteins that insert both dependently and independently of the Sec translocase complex, as well as at least some lipoproteins. Aids folding of multispanning membrane proteins. In Neisseria meningitidis serogroup C (strain 053442), this protein is Membrane protein insertase YidC.